The sequence spans 613 residues: Nuclear receptor subfamily 1 group D member 1 (613 aa).

Polar residues predominate over residues 1-48 (MTTLDSNNNTGGVITYIGSSGSSPNRTSPESLYSDSSNGSFQSLTQGC). A required for phosphorylation by CSNK1E and cytoplasmic localization region spans residues 1-70 (MTTLDSNNNT…TQDPARSFGS (70 aa)). Residues 1 to 102 (MTTLDSNNNT…SSFYNGSPPG (102 aa)) form a disordered region. The segment at 1–129 (MTTLDSNNNT…TSNITKLNGM (129 aa)) is modulating. The tract at residues 49–285 (PTYFPPSPTG…PPRSPSPEPT (237 aa)) is crucial for activation of GJA1. Ser55 and Ser59 each carry phosphoserine; by GSK3-beta. Residues 69–102 (GSIPPSLGDDGSPSSSSSSSSSSSSSFYNGSPPG) are compositionally biased toward low complexity. The nuclear receptor DNA-binding region spans 130 to 206 (VLLCKVCGDV…VGMSRDAVRF (77 aa)). 2 NR C4-type zinc fingers span residues 133–153 (CKVC…CEGC) and 170–194 (CLKN…FKKC). N6-acetyllysine; by KAT5 is present on residues Lys192 and Lys193. The disordered stretch occupies residues 233 to 286 (SSQCPLETPPTQHPTPGPMGPSPPPAPAPSPLVGFSQFPQQLTPPRSPSPEPTV). A compositionally biased stretch (pro residues) spans 239–262 (ETPPTQHPTPGPMGPSPPPAPAPS). Thr275 is subject to Phosphothreonine; by CDK1. The NR LBD domain occupies 285–613 (TVEDVISQVA…KLLSFRVDAQ (329 aa)). Position 417 (Cys417) interacts with heme. Lys590 bears the N6-acetyllysine mark. Heme is bound at residue His601.

Belongs to the nuclear hormone receptor family. NR1 subfamily. In terms of assembly, binds DNA as a monomer or a homodimer. Interacts with C1D, SP1 and ZNHIT1. Interacts with OPHN1 (via C-terminus). Interacts with PER2; the interaction associates PER2 to BMAL1 promoter region. Interacts with CRY1. Interacts with CCAR2. Interacts with NR2E3. Interacts with SIAH2. Interacts with FBXW7 and CDK1. Interacts with HUWE1. Interacts with NR0B2. Interacts with NFIL3. Interacts (via domain NR LBD) with HSP90AA1 and HSP90AB1. Post-translationally, ubiquitinated, leading to its proteasomal degradation. Ubiquitinated by the SCF(FBXW7) complex when phosphorylated by CDK1 leading to its proteasomal degradation. Ubiquitinated by SIAH2; leading to its proteasomal degradation. Rapidly ubiquitinated in response to inflammatory triggers and sumoylation is a prerequisite to its ubiquitination. In terms of processing, sumoylated by UBE2I, desumoylated by SENP1, and sumoylation is a prerequisite to its ubiquitination. Phosphorylated by CSNK1E; phosphorylation enhances its cytoplasmic localization. Post-translationally, undergoes lysosome-mediated degradation in a time-dependent manner in the liver. Expressed in all tissues and cell lines examined. Expressed at high levels in some squamous carcinoma cell lines.

Its subcellular location is the nucleus. The protein resides in the cytoplasm. It localises to the cell projection. It is found in the dendrite. The protein localises to the dendritic spine. In terms of biological role, transcriptional repressor which coordinates circadian rhythm and metabolic pathways in a heme-dependent manner. Integral component of the complex transcription machinery that governs circadian rhythmicity and forms a critical negative limb of the circadian clock by directly repressing the expression of core clock components BMAL1, CLOCK and CRY1. Also regulates genes involved in metabolic functions, including lipid and bile acid metabolism, adipogenesis, gluconeogenesis and the macrophage inflammatory response. Acts as a receptor for heme which stimulates its interaction with the NCOR1/HDAC3 corepressor complex, enhancing transcriptional repression. Recognizes two classes of DNA response elements within the promoter of its target genes and can bind to DNA as either monomers or homodimers, depending on the nature of the response element. Binds as a monomer to a response element composed of the consensus half-site motif 5'-[A/G]GGTCA-3' preceded by an A/T-rich 5' sequence (RevRE), or as a homodimer to a direct repeat of the core motif spaced by two nucleotides (RevDR-2). Acts as a potent competitive repressor of ROR alpha (RORA) function and regulates the levels of its ligand heme by repressing the expression of PPARGC1A, a potent inducer of heme synthesis. Regulates lipid metabolism by repressing the expression of APOC3 and by influencing the activity of sterol response element binding proteins (SREBPs); represses INSIG2 which interferes with the proteolytic activation of SREBPs which in turn govern the rhythmic expression of enzymes with key functions in sterol and fatty acid synthesis. Regulates gluconeogenesis via repression of G6PC1 and PEPCK and adipocyte differentiation via repression of PPARG. Regulates glucagon release in pancreatic alpha-cells via the AMPK-NAMPT-SIRT1 pathway and the proliferation, glucose-induced insulin secretion and expression of key lipogenic genes in pancreatic-beta cells. Positively regulates bile acid synthesis by increasing hepatic expression of CYP7A1 via repression of NR0B2 and NFIL3 which are negative regulators of CYP7A1. Modulates skeletal muscle oxidative capacity by regulating mitochondrial biogenesis and autophagy; controls mitochondrial biogenesis and respiration by interfering with the STK11-PRKAA1/2-SIRT1-PPARGC1A signaling pathway. Represses the expression of SERPINE1/PAI1, an important modulator of cardiovascular disease and the expression of inflammatory cytokines and chemokines in macrophages. Represses gene expression at a distance in macrophages by inhibiting the transcription of enhancer-derived RNAs (eRNAs). Plays a role in the circadian regulation of body temperature and negatively regulates thermogenic transcriptional programs in brown adipose tissue (BAT); imposes a circadian oscillation in BAT activity, increasing body temperature when awake and depressing thermogenesis during sleep. In concert with NR2E3, regulates transcriptional networks critical for photoreceptor development and function. In addition to its activity as a repressor, can also act as a transcriptional activator. In the ovarian granulosa cells acts as a transcriptional activator of STAR which plays a role in steroid biosynthesis. In collaboration with SP1, activates GJA1 transcription in a heme-independent manner. Represses the transcription of CYP2B10, CYP4A10 and CYP4A14. Represses the transcription of CES2. Represses and regulates the circadian expression of TSHB in a NCOR1-dependent manner. Negatively regulates the protein stability of NR3C1 and influences the time-dependent subcellular distribution of NR3C1, thereby affecting its transcriptional regulatory activity. Plays a critical role in the circadian control of neutrophilic inflammation in the lung; under resting, non-stress conditions, acts as a rhythmic repressor to limit inflammatory activity whereas in the presence of inflammatory triggers undergoes ubiquitin-mediated degradation thereby relieving inhibition of the inflammatory response. Plays a key role in the circadian regulation of microglial activation and neuroinflammation; suppresses microglial activation through the NF-kappaB pathway in the central nervous system. Plays a role in the regulation of the diurnal rhythms of lipid and protein metabolism in the skeletal muscle via transcriptional repression of genes controlling lipid and amino acid metabolism in the muscle. In Bos taurus (Bovine), this protein is Nuclear receptor subfamily 1 group D member 1 (NR1D1).